A 492-amino-acid polypeptide reads, in one-letter code: MNILRRIPANLIASRYYYTNRVKKTTLYSKISPLGDPKSSVYPELQNWVQCGKKVSVAELIRIVHDLRRRKRFLHALEVSKWMNETGVCVFSPTEHAVHLDLIGRVYGFVTAEEYFENLKEQYKNDKTYGALLNCYVRQQNVEKSLLHFEKMKEMGFVTSSLTYNNIMCLYTNIGQHEKVPKVLEEMKEENVAPDNYSYRICINAFGAMYDLERIGGTLRDMERRQDITMDWNTYAVAAKFYIDGGDCDRAVELLKMSENRLEKKDGEGYNHLITLYARLGKKIEVLRLWDLEKDVCKRRINQDYLTVLQSLVKIDALVEAEEVLTEWKSSGNCYDFRVPNTVIRGYIGKSMEEKAEAMLEDLARRGKATTPESWELVATAYAEKGTLENAFKCMKTALGVEVGSRKWRPGLTLVTSVLSWVGDEGSLKEVESFVASLRNCIGVNKQMYHALVKADIREGGRNIDTLLQRMKDDKIEIDEETTVILSTRSPC.

A mitochondrion-targeting transit peptide spans Met-1 to Tyr-17. 8 PPR repeats span residues Asn-125–Thr-159, Ser-160–Pro-194, Asp-195–Arg-225, Asp-231–Arg-261, Asp-266–Val-296, Ile-301–Tyr-335, Asp-336–Thr-370, and Thr-371–Ser-405.

It belongs to the PPR family. P subfamily.

Its subcellular location is the mitochondrion. This is Pentatricopeptide repeat-containing protein At4g21705, mitochondrial from Arabidopsis thaliana (Mouse-ear cress).